A 122-amino-acid chain; its full sequence is Glycine cleavage system H protein (122 aa).

The Lipoyl-binding domain occupies 22-103 (IGIIGISDYA…AFGSWFFKVE (82 aa)). Lys63 is modified (N6-lipoyllysine).

Belongs to the GcvH family. In terms of assembly, the glycine cleavage system is composed of four proteins: P, T, L and H. Requires (R)-lipoate as cofactor.

In terms of biological role, the glycine cleavage system catalyzes the degradation of glycine. The H protein shuttles the methylamine group of glycine from the P protein to the T protein. The chain is Glycine cleavage system H protein from Treponema denticola (strain ATCC 35405 / DSM 14222 / CIP 103919 / JCM 8153 / KCTC 15104).